The following is a 482-amino-acid chain: Butyrophilin-like protein 2 (482 aa).

Topologically, residues 1-6 (MVDFPG) are cytoplasmic. A helical; Signal-anchor for type II membrane protein membrane pass occupies residues 7 to 23 (YNLSGAVASFLFILLTM). The Extracellular segment spans residues 24–482 (KQSEDFRVIG…VAVGLPRKRS (459 aa)). Ig-like V-type domains follow at residues 29–140 (FRVI…LLLK), 142–234 (AGLG…SVIS), and 236–355 (PEKL…ASLD). Cystine bridges form between Cys-50-Cys-124, Cys-164-Cys-218, and Cys-267-Cys-341. Residue Asn-210 is glycosylated (N-linked (GlcNAc...) asparagine). Asn-427 carries N-linked (GlcNAc...) asparagine glycosylation.

It belongs to the immunoglobulin superfamily. BTN/MOG family. In terms of tissue distribution, expressed in brain, heart, kidney, liver, pancreas, ovary, leukocyte, small intestine, testis and thymus.

Its subcellular location is the membrane. Functionally, negative regulator of T-cell proliferation. The chain is Butyrophilin-like protein 2 from Homo sapiens (Human).